The chain runs to 908 residues: Autophagy-related protein 9 (908 aa).

Residues methionine 1–arginine 216 are Cytoplasmic-facing. Positions serine 64–histidine 162 are disordered. The helical transmembrane segment at valine 217–valine 237 threads the bilayer. Residues aspartate 238 to asparagine 259 lie on the Lumenal side of the membrane. An N-linked (GlcNAc...) asparagine glycan is attached at asparagine 259. Residues methionine 260–isoleucine 280 traverse the membrane as a helical segment. Topologically, residues glutamine 281–arginine 433 are cytoplasmic. An intramembrane segment occupies phenylalanine 434–isoleucine 454. At valine 455–serine 525 the chain is on the cytoplasmic side. Residues phenylalanine 526–phenylalanine 546 traverse the membrane as a helical segment. Topologically, residues leucine 547–arginine 555 are lumenal. Residues threonine 556–serine 576 form a helical membrane-spanning segment. The Cytoplasmic portion of the chain corresponds to glutamate 577–lysine 622. An intramembrane segment occupies leucine 623–serine 643. Topologically, residues leucine 644 to arginine 908 are cytoplasmic. Disordered regions lie at residues alanine 751 to alanine 779 and glutamine 809 to valine 878. Residues glycine 813–serine 825 show a composition bias toward gly residues. Positions glutamine 839 to leucine 852 are enriched in basic and acidic residues.

The protein belongs to the ATG9 family. As to quaternary structure, homotrimer; forms a homotrimer with a central pore that forms a path between the two membrane leaflets. In terms of processing, phosphorylated by apg-1. Apg-1 phosphorylation is required for preautophagosome elongation.

Its subcellular location is the preautophagosomal structure membrane. The protein resides in the cytoplasmic vesicle membrane. The protein localises to the golgi apparatus membrane. It localises to the endoplasmic reticulum membrane. It catalyses the reaction a 1,2-diacyl-sn-glycero-3-phosphocholine(in) = a 1,2-diacyl-sn-glycero-3-phosphocholine(out). The catalysed reaction is a 1,2-diacyl-sn-glycero-3-phospho-L-serine(in) = a 1,2-diacyl-sn-glycero-3-phospho-L-serine(out). It carries out the reaction a 1,2-diacyl-sn-glycero-3-phosphoethanolamine(in) = a 1,2-diacyl-sn-glycero-3-phosphoethanolamine(out). The enzyme catalyses a 1,2-diacyl-sn-glycero-3-phospho-(1D-myo-inositol-3-phosphate)(in) = a 1,2-diacyl-sn-glycero-3-phospho-(1D-myo-inositol-3-phosphate)(out). Functionally, phospholipid scramblase involved in autophagy and cytoplasm to vacuole transport (Cvt) vesicle formation. Cycles between the preautophagosomal structure/phagophore assembly site (PAS) and the cytoplasmic vesicle pool and supplies membrane for the growing autophagosome. Lipid scramblase activity plays a key role in preautophagosomal structure/phagophore assembly by distributing the phospholipids that arrive through atg-2 from the cytoplasmic to the luminal leaflet of the bilayer, thereby driving autophagosomal membrane expansion. Required for mitophagy. Also involved in endoplasmic reticulum-specific autophagic process and is essential for the survival of cells subjected to severe ER stress. Different machineries are required for anterograde trafficking to the PAS during either the Cvt pathway or bulk autophagy and for retrograde trafficking. The protein is Autophagy-related protein 9 (apg-7) of Neurospora crassa (strain ATCC 24698 / 74-OR23-1A / CBS 708.71 / DSM 1257 / FGSC 987).